Consider the following 519-residue polypeptide: MDAGLIILDGWGLNPDDDVRDAVAAADTPNFDRYRDAGAASTLTTHGRRVGLPEGQMGNSEVGHLNIGAGRVVKQDSARVSDSIARSRGEAPPDDDAQDPPFFENETILSAFEHAEAHGGRVHFMGLVSDGGVHSYQDHLHALIELAGERGTDAVSHAFTDGRDTSPTGGEDYLADLEAHVEEHGTGHVATVCGRYYAMDRDQNWERTRRAYDAIVHREGDHHADEAVTAATESYARDTTDEFIEPTTVGDHAGLEAGDAVVFFNFRSDRARQLTRMLGDIRPEDWGSDTEPPDTRLVTMTQYDETFDLPVAFPPNQPADVLGEVLSEAGKTQIRLAETEKYPHVTYFLNGGREVAFDGESREIVDSPDVATYDLQPEMSAPELADTAIEFIETEDPSAMVLNFANPDMVGHTGDFDAAVTAVEAVDEQLGRLVETIGAAGGHALICADHGNADDMGTEDDPHTAHTTNPVPFIYLSPDGTAGGRTARDGGTLADLAPTMLTLMGIDRPDAMTGTPLVE.

Residues Asp9 and Ser60 each coordinate Mn(2+). Ser60 functions as the Phosphoserine intermediate in the catalytic mechanism. A compositionally biased stretch (basic and acidic residues) spans 76 to 91 (DSARVSDSIARSRGEA). The tract at residues 76–102 (DSARVSDSIARSRGEAPPDDDAQDPPF) is disordered. Substrate contacts are provided by residues His134, 163–164 (RD), Arg195, Arg201, 267–270 (RSDR), and Lys341. Residues Asp408, His412, Asp449, His450, and His466 each contribute to the Mn(2+) site.

Belongs to the BPG-independent phosphoglycerate mutase family. Requires Mn(2+) as cofactor.

The catalysed reaction is (2R)-2-phosphoglycerate = (2R)-3-phosphoglycerate. The protein operates within carbohydrate degradation; glycolysis; pyruvate from D-glyceraldehyde 3-phosphate: step 3/5. Functionally, catalyzes the interconversion of 2-phosphoglycerate and 3-phosphoglycerate. This is 2,3-bisphosphoglycerate-independent phosphoglycerate mutase from Haloarcula marismortui (strain ATCC 43049 / DSM 3752 / JCM 8966 / VKM B-1809) (Halobacterium marismortui).